Consider the following 143-residue polypeptide: Period circadian protein (143 aa).

Residues 25-130 (NSKPVTAPTQ…GPSLAADNSI (106 aa)) form a disordered region. Low complexity-rich tracts occupy residues 71-93 (SGNC…ITGT) and 114-126 (GGAA…SLAA).

In terms of assembly, forms a heterodimer with timeless (TIM); the complex then translocates into the nucleus. In terms of processing, phosphorylated with a circadian rhythmicity, probably by the double-time protein (dbt). Phosphorylation could be implicated in the stability of per monomer and in the formation of heterodimer per-tim.

It localises to the nucleus. Its subcellular location is the cytoplasm. It is found in the perinuclear region. Essential for biological clock functions. Determines the period length of circadian and ultradian rhythms; an increase in PER dosage leads to shortened circadian rhythms and a decrease leads to lengthened circadian rhythms. Essential for the circadian rhythmicity of locomotor activity, eclosion behavior, and for the rhythmic component of the male courtship song that originates in the thoracic nervous system. The biological cycle depends on the rhythmic formation and nuclear localization of the TIM-PER complex. Light induces the degradation of TIM, which promotes elimination of PER. Nuclear activity of the heterodimer coordinatively regulates PER and TIM transcription through a negative feedback loop. Behaves as a negative element in circadian transcriptional loop. Does not appear to bind DNA, suggesting indirect transcriptional inhibition. This Drosophila picticornis (Fruit fly) protein is Period circadian protein (per).